The chain runs to 110 residues: Cyclin-dependent protein kinase inhibitor SMR8 (110 aa).

In terms of assembly, interacts with CDKA-1 and D-type cyclins. In terms of tissue distribution, expressed in the root vascular tissue.

Its function is as follows. Probable cyclin-dependent protein kinase (CDK) inhibitor that functions as a repressor of mitosis in the endoreduplication cell cycle. The protein is Cyclin-dependent protein kinase inhibitor SMR8 of Arabidopsis thaliana (Mouse-ear cress).